The chain runs to 429 residues: Inositol-3-phosphate synthase 1 (429 aa).

The helical transmembrane segment at 12-32 threads the bilayer; that stretch reads LGVLVVGVGGAVATTMIVGTL. Residues Ala22, Val23, Asp79, Ala116, Ala165, Thr167, Tyr201, Ser244, Arg276, Asp277, and Lys290 each coordinate NAD(+).

It belongs to the myo-inositol 1-phosphate synthase family. As to quaternary structure, homotetramer. The cofactor is NAD(+).

The protein resides in the membrane. The catalysed reaction is D-glucose 6-phosphate = 1D-myo-inositol 3-phosphate. It functions in the pathway polyol metabolism; myo-inositol biosynthesis; myo-inositol from D-glucose 6-phosphate: step 1/2. Key enzyme in myo-inositol biosynthesis pathway that catalyzes the conversion of glucose 6-phosphate to 1D-myo-inositol 3-phosphate in a NAD-dependent manner. In Bacteroides thetaiotaomicron (strain ATCC 29148 / DSM 2079 / JCM 5827 / CCUG 10774 / NCTC 10582 / VPI-5482 / E50), this protein is Inositol-3-phosphate synthase 1.